A 142-amino-acid chain; its full sequence is Large ribosomal subunit protein mL42 (142 aa).

The transit peptide at Met-1–His-31 directs the protein to the mitochondrion.

This sequence belongs to the mitochondrion-specific ribosomal protein mL42 family. As to quaternary structure, component of the mitochondrial ribosome large subunit (39S) which comprises a 16S rRNA and about 50 distinct proteins. Component of the mitochondrial ribosome small subunit (28S) which comprises a 12S rRNA and about 30 distinct proteins.

Its subcellular location is the mitochondrion. This Mus musculus (Mouse) protein is Large ribosomal subunit protein mL42 (Mrpl42).